The chain runs to 158 residues: 6,7-dimethyl-8-ribityllumazine synthase (158 aa).

5-amino-6-(D-ribitylamino)uracil contacts are provided by residues F18, 50 to 52 (SYD), and 74 to 76 (AVI). 79-80 (ET) is a binding site for (2S)-2-hydroxy-3-oxobutyl phosphate. H82 (proton donor) is an active-site residue. L107 is a binding site for 5-amino-6-(D-ribitylamino)uracil. R122 serves as a coordination point for (2S)-2-hydroxy-3-oxobutyl phosphate.

Belongs to the DMRL synthase family.

It catalyses the reaction (2S)-2-hydroxy-3-oxobutyl phosphate + 5-amino-6-(D-ribitylamino)uracil = 6,7-dimethyl-8-(1-D-ribityl)lumazine + phosphate + 2 H2O + H(+). Its pathway is cofactor biosynthesis; riboflavin biosynthesis; riboflavin from 2-hydroxy-3-oxobutyl phosphate and 5-amino-6-(D-ribitylamino)uracil: step 1/2. In terms of biological role, catalyzes the formation of 6,7-dimethyl-8-ribityllumazine by condensation of 5-amino-6-(D-ribitylamino)uracil with 3,4-dihydroxy-2-butanone 4-phosphate. This is the penultimate step in the biosynthesis of riboflavin. The polypeptide is 6,7-dimethyl-8-ribityllumazine synthase (Sulfolobus acidocaldarius (strain ATCC 33909 / DSM 639 / JCM 8929 / NBRC 15157 / NCIMB 11770)).